The sequence spans 427 residues: Dihydroorotase (427 aa).

Zn(2+) contacts are provided by histidine 60 and histidine 62. Residues 62 to 64 and asparagine 94 each bind substrate; that span reads HLR. Positions 152, 179, and 232 each coordinate Zn(2+). Residue asparagine 278 participates in substrate binding. Residue aspartate 305 participates in Zn(2+) binding. Aspartate 305 is an active-site residue. Residues histidine 309 and 323–324 contribute to the substrate site; that span reads FG.

This sequence belongs to the metallo-dependent hydrolases superfamily. DHOase family. Class I DHOase subfamily. Zn(2+) serves as cofactor.

It catalyses the reaction (S)-dihydroorotate + H2O = N-carbamoyl-L-aspartate + H(+). Its pathway is pyrimidine metabolism; UMP biosynthesis via de novo pathway; (S)-dihydroorotate from bicarbonate: step 3/3. Functionally, catalyzes the reversible cyclization of carbamoyl aspartate to dihydroorotate. The protein is Dihydroorotase of Geobacillus sp. (strain WCH70).